The following is a 332-amino-acid chain: Transcription regulatory protein SNF6 (332 aa).

Residues 2–8 carry the Nuclear localization signal motif; it reads GVIKKKR. Thr-165 bears the Phosphothreonine mark. Residues 278-299 form a disordered region; it reads VTTVASQSPHATATEKEPVPAV.

Component of the SWI/SNF global transcription activator complex. The 1.14 MDa SWI/SNF complex is composed of 11 different subunits: one copy each of SWI1, SNF2/SWI2, SNF5, SNF12/SWP73, ARP7/SWP61, ARP9/SWP59; two copies each of SWI3, SNF6, SNF11, SWP82; and three copies of TAF14/SWP29.

It is found in the nucleus. Functionally, involved in transcriptional activation. Component of the SWI/SNF complex, an ATP-dependent chromatin remodeling complex, which is required for the positive and negative regulation of gene expression of a large number of genes. It changes chromatin structure by altering DNA-histone contacts within a nucleosome, leading eventually to a change in nucleosome position, thus facilitating or repressing binding of gene-specific transcription factors. The chain is Transcription regulatory protein SNF6 (SNF6) from Saccharomyces cerevisiae (strain ATCC 204508 / S288c) (Baker's yeast).